The primary structure comprises 237 residues: MTDLQTQMKIAVAQEAIGEIKDGMILGLGSGSTAALMIKSLGEKLKEGSLKEIIGVPTSFQGEVLASQLGIPLRAFSAVSKIDLAIDGADEVDPNFQLIKGGGACHVQEKLVASIADRFVVVVDSTKIVEKLNLEFKLPVEVLPAAWKLVQKELNDLGAKSDLRMAEKKAGPIVTDQGNLVLDVQFADGISDPQNLEKQINNFPGVLENGLFVNLTDEVLVGEIKNGVSSVNRLKKA.

Substrate is bound by residues 30–33, 87–90, and 100–103; these read SGST, DGAD, and KGGG. The active-site Proton acceptor is the E109. K127 contributes to the substrate binding site.

This sequence belongs to the ribose 5-phosphate isomerase family. Homodimer.

It carries out the reaction aldehydo-D-ribose 5-phosphate = D-ribulose 5-phosphate. It participates in carbohydrate degradation; pentose phosphate pathway; D-ribose 5-phosphate from D-ribulose 5-phosphate (non-oxidative stage): step 1/1. In terms of biological role, catalyzes the reversible conversion of ribose-5-phosphate to ribulose 5-phosphate. In Prochlorococcus marinus (strain SARG / CCMP1375 / SS120), this protein is Ribose-5-phosphate isomerase A.